The primary structure comprises 206 residues: Transmembrane emp24 domain-containing protein bai (206 aa).

An N-terminal signal peptide occupies residues Met-1–Ser-20. At Val-21–Arg-172 the chain is on the lumenal side. A GOLD domain is found at Gln-30–Arg-140. The chain crosses the membrane as a helical span at residues Val-173–Leu-193. At Tyr-194–Glu-206 the chain is on the cytoplasmic side.

The protein belongs to the EMP24/GP25L family.

The protein resides in the membrane. Eca and bai are essential, though not redundant, for dorsoventral patterning of the embryo. Specifically required during early embryogenesis for the activity of maternal tkv, while the zygotic tkv is not affected. The protein is Transmembrane emp24 domain-containing protein bai of Drosophila willistoni (Fruit fly).